An 89-amino-acid chain; its full sequence is Large ribosomal subunit protein uL23c (89 aa).

Belongs to the universal ribosomal protein uL23 family. Part of the 50S ribosomal subunit.

It localises to the plastid. It is found in the chloroplast. In terms of biological role, binds to 23S rRNA. This Zygnema circumcarinatum (Green alga) protein is Large ribosomal subunit protein uL23c (rpl23).